The sequence spans 332 residues: Twinfilin-1 (332 aa).

One can recognise an ADF-H 1 domain in the interval 5-132; it reads SGIVAEQALL…VDLKNFDSAR (128 aa). A phosphoserine mark is found at Ser-167 and Ser-172. One can recognise an ADF-H 2 domain in the interval 173-300; the sequence is PLSLTFRVNS…DKSLLMATNK (128 aa). A disordered region spans residues 301–332; the sequence is EDSLDHGSNPDLPNKSNLKFNKPKGPLRKRRT. Basic residues predominate over residues 321 to 332; it reads NKPKGPLRKRRT.

The protein belongs to the actin-binding proteins ADF family. Twinfilin subfamily. As to quaternary structure, interacts with G-actin; ADP-actin form.

Its subcellular location is the cytoplasm. The protein localises to the cytoskeleton. Functionally, actin-binding protein involved in motile and morphological processes. Inhibits actin polymerization, likely by sequestering G-actin. Prevents actin filament assembly by forming a 1:1 complex with actin monomers, and inhibits the nucleotide exchange reaction of actin monomers. This chain is Twinfilin-1 (TWF1), found in Saccharomyces cerevisiae (strain ATCC 204508 / S288c) (Baker's yeast).